The chain runs to 141 residues: Hemoglobin subunit alpha-D (141 aa).

The Globin domain occupies 1–141 (MLTAEDKKLI…VAAVLAEKYR (141 aa)). Residues His-58 and His-87 each coordinate heme b.

It belongs to the globin family. In terms of assembly, heterotetramer of two alpha-D chains and two beta chains. In terms of tissue distribution, red blood cells.

Its function is as follows. Involved in oxygen transport from the lung to the various peripheral tissues. The sequence is that of Hemoglobin subunit alpha-D (HBAD) from Cairina moschata (Muscovy duck).